Reading from the N-terminus, the 136-residue chain is Gonadotropin subunit beta-2 (136 aa).

An N-terminal signal peptide occupies residues 1 to 21 (MVCLFLGASSFIWSLAPAAAA). 6 disulfide bridges follow: cysteine 27-cysteine 75, cysteine 41-cysteine 90, cysteine 44-cysteine 128, cysteine 52-cysteine 106, cysteine 56-cysteine 108, and cysteine 111-cysteine 118. N-linked (GlcNAc...) asparagine glycosylation is present at asparagine 31.

The protein belongs to the glycoprotein hormones subunit beta family. Heterodimer of an alpha and a beta chain.

It is found in the secreted. Its function is as follows. Involved in gametogenesis and steroidogenesis. The polypeptide is Gonadotropin subunit beta-2 (cgbb) (Fundulus heteroclitus (Killifish)).